A 349-amino-acid chain; its full sequence is Anthranilate phosphoribosyltransferase (349 aa).

Residues glycine 82, 85–86 (GD), threonine 90, 92–95 (NVST), 110–118 (KHGNRSVSS), and glycine 122 contribute to the 5-phospho-alpha-D-ribose 1-diphosphate site. Anthranilate is bound at residue glycine 82. Serine 94 is a binding site for Mg(2+). An anthranilate-binding site is contributed by asparagine 113. Arginine 168 serves as a coordination point for anthranilate. Mg(2+)-binding residues include aspartate 232 and glutamate 233.

Belongs to the anthranilate phosphoribosyltransferase family. Homodimer. Mg(2+) is required as a cofactor.

The catalysed reaction is N-(5-phospho-beta-D-ribosyl)anthranilate + diphosphate = 5-phospho-alpha-D-ribose 1-diphosphate + anthranilate. Its pathway is amino-acid biosynthesis; L-tryptophan biosynthesis; L-tryptophan from chorismate: step 2/5. Its function is as follows. Catalyzes the transfer of the phosphoribosyl group of 5-phosphorylribose-1-pyrophosphate (PRPP) to anthranilate to yield N-(5'-phosphoribosyl)-anthranilate (PRA). The chain is Anthranilate phosphoribosyltransferase from Methanosphaera stadtmanae (strain ATCC 43021 / DSM 3091 / JCM 11832 / MCB-3).